Consider the following 348-residue polypeptide: NADH-quinone oxidoreductase subunit H (348 aa).

A run of 8 helical transmembrane segments spans residues 10 to 30 (LPLFIVVGKTLLLLTVLLVLI), 82 to 102 (GVFLLAPFVSATLALSAWAVV), 115 to 135 (VGLLYILAISSLEVYGVIMGG), 161 to 181 (IGFVLVTVILVSGSLDLTTIV), 199 to 219 (LLDWNWLILFPMFIIFFISAL), 251 to 271 (LFFLGEYVAIVLMCALTTILF), 287 to 307 (VPGVIWFVLKVCFVFFWFAMV), and 322 to 342 (LGWKVFLPISLAMVVITAAIL).

The protein belongs to the complex I subunit 1 family. In terms of assembly, NDH-1 is composed of 14 different subunits. Subunits NuoA, H, J, K, L, M, N constitute the membrane sector of the complex.

The protein resides in the cell inner membrane. The catalysed reaction is a quinone + NADH + 5 H(+)(in) = a quinol + NAD(+) + 4 H(+)(out). NDH-1 shuttles electrons from NADH, via FMN and iron-sulfur (Fe-S) centers, to quinones in the respiratory chain. The immediate electron acceptor for the enzyme in this species is believed to be ubiquinone. Couples the redox reaction to proton translocation (for every two electrons transferred, four hydrogen ions are translocated across the cytoplasmic membrane), and thus conserves the redox energy in a proton gradient. This subunit may bind ubiquinone. The polypeptide is NADH-quinone oxidoreductase subunit H (Bartonella bacilliformis (strain ATCC 35685 / KC583 / Herrer 020/F12,63)).